The chain runs to 91 residues: Ragulator complex protein LAMTOR5 homolog (91 aa).

Belongs to the LAMTOR5 family. In terms of assembly, part of the Ragulator complex.

Its subcellular location is the cytoplasm. The protein resides in the lysosome. Functionally, regulator of the TOR pathway, a signaling cascade that promotes cell growth in response to growth factors, energy levels, and amino acids. As part of the Ragulator complex, may activate the TOR signaling cascade in response to amino acids. The polypeptide is Ragulator complex protein LAMTOR5 homolog (Nematostella vectensis (Starlet sea anemone)).